Consider the following 460-residue polypeptide: ATP synthase subunit beta (460 aa).

150 to 157 (GGAGVGKT) serves as a coordination point for ATP.

The protein belongs to the ATPase alpha/beta chains family. As to quaternary structure, F-type ATPases have 2 components, CF(1) - the catalytic core - and CF(0) - the membrane proton channel. CF(1) has five subunits: alpha(3), beta(3), gamma(1), delta(1), epsilon(1). CF(0) has three main subunits: a(1), b(2) and c(9-12). The alpha and beta chains form an alternating ring which encloses part of the gamma chain. CF(1) is attached to CF(0) by a central stalk formed by the gamma and epsilon chains, while a peripheral stalk is formed by the delta and b chains.

It is found in the cell inner membrane. It carries out the reaction ATP + H2O + 4 H(+)(in) = ADP + phosphate + 5 H(+)(out). Its function is as follows. Produces ATP from ADP in the presence of a proton gradient across the membrane. The catalytic sites are hosted primarily by the beta subunits. This chain is ATP synthase subunit beta, found in Salmonella paratyphi A (strain ATCC 9150 / SARB42).